A 435-amino-acid polypeptide reads, in one-letter code: Histidine--tRNA ligase (435 aa).

The segment at Ser415–Glu435 is disordered. Basic and acidic residues predominate over residues Asp424–Glu435.

The protein belongs to the class-II aminoacyl-tRNA synthetase family.

Its subcellular location is the cytoplasm. The enzyme catalyses tRNA(His) + L-histidine + ATP = L-histidyl-tRNA(His) + AMP + diphosphate + H(+). The chain is Histidine--tRNA ligase from Haloarcula marismortui (strain ATCC 43049 / DSM 3752 / JCM 8966 / VKM B-1809) (Halobacterium marismortui).